We begin with the raw amino-acid sequence, 197 residues long: 3-isopropylmalate dehydratase small subunit (197 aa).

Belongs to the LeuD family. LeuD type 1 subfamily. Heterodimer of LeuC and LeuD.

It carries out the reaction (2R,3S)-3-isopropylmalate = (2S)-2-isopropylmalate. The protein operates within amino-acid biosynthesis; L-leucine biosynthesis; L-leucine from 3-methyl-2-oxobutanoate: step 2/4. Functionally, catalyzes the isomerization between 2-isopropylmalate and 3-isopropylmalate, via the formation of 2-isopropylmaleate. This Geobacillus kaustophilus (strain HTA426) protein is 3-isopropylmalate dehydratase small subunit.